Consider the following 241-residue polypeptide: MATVSMRDMLKAGVHFGHQTRYWNPKMKPFIFGARNKVHIINLEKTVPMFNEALAELSKISSRKGKILFVGTKRAASEAVKDAANNCDQFFVNHRWLGGMLTNWKTVRQSIKRLKDLEIQSQDGTFDKLTKKEALMRTRELAKLENSLGGIKDMGGLPDALFVIDADHEHIAIKEANNLGIPVFAIVDTNSDPDGVDFVIPGNDDAIRAVTLYLGAVAATVREGRSQDLASQAEESFVEAE.

It belongs to the universal ribosomal protein uS2 family.

The chain is Small ribosomal subunit protein uS2 from Enterobacter sp. (strain 638).